The primary structure comprises 417 residues: NADH-dependent phenylglyoxylate dehydrogenase subunit alpha (417 aa).

Dimer of heteropentamers composed of an alpha (PadG), a beta (PadI), a gamma (PadE), a delta (PadF) and an epsilon (PadH) subunit.

The catalysed reaction is phenylglyoxylate + NAD(+) + CoA = benzoyl-CoA + CO2 + NADH. With respect to regulation, activated by magnesium ions and thiamine diphosphate. Involved in the anaerobic metabolism of phenylalanine and phenylacetate. Catalyzes the oxidative decarboxylation of phenylglyoxylate to benzoyl-CoA and CO(2). It can also react slowly with 2-oxo-3-methylbutanoate and use different electron acceptors such as benzyl viologen, methyl viologen, FAD or FMN, but NAD seems to be the physiological electron acceptor. Also catalyzes an isotope exchange between CO(2) and the carboxyl group which proves partial or complete reversibility of the oxidative decarboxylation reaction. In Aromatoleum evansii (Azoarcus evansii), this protein is NADH-dependent phenylglyoxylate dehydrogenase subunit alpha (padG).